The sequence spans 397 residues: DNA replication and repair protein RecF (397 aa).

Position 30–37 (30–37 (GPNGQGKT)) interacts with ATP.

Belongs to the RecF family.

The protein resides in the cytoplasm. The RecF protein is involved in DNA metabolism; it is required for DNA replication and normal SOS inducibility. RecF binds preferentially to single-stranded, linear DNA. It also seems to bind ATP. This is DNA replication and repair protein RecF from Beutenbergia cavernae (strain ATCC BAA-8 / DSM 12333 / CCUG 43141 / JCM 11478 / NBRC 16432 / NCIMB 13614 / HKI 0122).